A 232-amino-acid chain; its full sequence is Small ribosomal subunit protein uS2 (232 aa).

It belongs to the universal ribosomal protein uS2 family.

This is Small ribosomal subunit protein uS2 from Natranaerobius thermophilus (strain ATCC BAA-1301 / DSM 18059 / JW/NM-WN-LF).